Reading from the N-terminus, the 213-residue chain is Phosphoribosyl-dephospho-CoA transferase (213 aa).

Catalysis depends on residues Asp-135 and Asp-137.

This sequence belongs to the MdcG family.

The enzyme catalyses apo-[malonate decarboxylase ACP] + 2'-(5''-triphospho-alpha-D-ribosyl)-3'-dephospho-CoA = holo-[malonate decarboxylase ACP] + diphosphate. Transfers 2'-(5-triphosphoribosyl)-3'-dephosphocoenzyme-A to the apo-[acyl-carrier-protein] of the malonate decarboxylase to yield holo-[acyl-carrier-protein]. In Xanthomonas campestris pv. campestris (strain ATCC 33913 / DSM 3586 / NCPPB 528 / LMG 568 / P 25), this protein is Phosphoribosyl-dephospho-CoA transferase.